The following is a 310-amino-acid chain: DNA-directed RNA polymerase subunit alpha (310 aa).

Residues 1-230 (MLGKVNGVQI…KLFNPLRVLD (230 aa)) form an alpha N-terminal domain (alpha-NTD) region. The segment at 242–310 (NSLIKQKLIE…YKKFGVKLKH (69 aa)) is alpha C-terminal domain (alpha-CTD).

This sequence belongs to the RNA polymerase alpha chain family. As to quaternary structure, in plastids the minimal PEP RNA polymerase catalytic core is composed of four subunits: alpha, beta, beta', and beta''. When a (nuclear-encoded) sigma factor is associated with the core the holoenzyme is formed, which can initiate transcription.

The protein resides in the plastid. It localises to the chloroplast. It carries out the reaction RNA(n) + a ribonucleoside 5'-triphosphate = RNA(n+1) + diphosphate. Its function is as follows. DNA-dependent RNA polymerase catalyzes the transcription of DNA into RNA using the four ribonucleoside triphosphates as substrates. The polypeptide is DNA-directed RNA polymerase subunit alpha (Cyanidium caldarium (Red alga)).